The chain runs to 118 residues: Large ribosomal subunit protein bL20 (118 aa).

The protein belongs to the bacterial ribosomal protein bL20 family.

Functionally, binds directly to 23S ribosomal RNA and is necessary for the in vitro assembly process of the 50S ribosomal subunit. It is not involved in the protein synthesizing functions of that subunit. The sequence is that of Large ribosomal subunit protein bL20 from Photorhabdus laumondii subsp. laumondii (strain DSM 15139 / CIP 105565 / TT01) (Photorhabdus luminescens subsp. laumondii).